The primary structure comprises 406 residues: DAZ-associated protein 1 (406 aa).

Residue Met1 is modified to N-acetylmethionine. RRM domains lie at 10–97 (GKLF…RTRP) and 113–190 (NKIF…RAEP). A disordered region spans residues 74 to 117 (TLDGRNIDPKPCTPRGMQPERTRPKEGWQKGPRSDSSKSNKIFV). A compositionally biased stretch (basic and acidic residues) spans 91–111 (QPERTRPKEGWQKGPRSDSSK). N6-acetyllysine is present on Lys150. A disordered region spans residues 186 to 406 (KRAEPRDSKN…NVQGFHPYRR (221 aa)). Polar residues predominate over residues 195-207 (NQAPGQPGASQWG). Pro residues predominate over residues 247–262 (GPPPAGRGAPPPPPPF). Arg253 is modified (omega-N-methylarginine). Positions 280–294 (FPQGYGAPPQFSFGY) are enriched in low complexity. Residues 295–315 (GPPPPPPDQFAPPGVPPPPAT) show a composition bias toward pro residues. Residues 363 to 378 (SDPSQQPPSYGGPSVP) are compositionally biased toward low complexity. The segment covering 379-392 (GSGGPPAGGSGFGR) has biased composition (gly residues).

In terms of assembly, interacts with DAZ and DAZL. Acetylation at Lys-150 is predominantly observed in the nuclear fraction, and may regulate nucleocytoplasmic transport. Mainly expressed in testis. Expressed at much lower level in liver, heart and brain. Also expressed in ovary. Expressed throughout testes development, in both the prenatal and postnatal periods.

It localises to the cytoplasm. The protein resides in the nucleus. In terms of biological role, RNA-binding protein, which may be required during spermatogenesis. In Mus musculus (Mouse), this protein is DAZ-associated protein 1 (Dazap1).